The following is a 364-amino-acid chain: D-alanine--D-alanine ligase A (364 aa).

One can recognise an ATP-grasp domain in the interval 145–348; that stretch reads KRLLRDAGLN…YTDLISRLIE (204 aa). 175–230 provides a ligand contact to ATP; the sequence is ESRLGLPLFVKPANQGSSVGVSKVANEAQYQQAVALAFEFDHKVVVEQGIKGREIE. Mg(2+) is bound by residues Asp302, Glu315, and Asn317.

It belongs to the D-alanine--D-alanine ligase family. Mg(2+) serves as cofactor. Mn(2+) is required as a cofactor.

It is found in the cytoplasm. It catalyses the reaction 2 D-alanine + ATP = D-alanyl-D-alanine + ADP + phosphate + H(+). Its pathway is cell wall biogenesis; peptidoglycan biosynthesis. In terms of biological role, cell wall formation. This Salmonella typhi protein is D-alanine--D-alanine ligase A (ddlA).